Consider the following 65-residue polypeptide: Hirudin-3 (65 aa).

The segment at 1–3 is interaction with thrombin active site; sequence VVY. Disulfide bonds link Cys6-Cys14, Cys16-Cys28, and Cys22-Cys39. The tract at residues 39–65 is disordered; that stretch reads CVTGEGTPKPQSHNDGDFEEIPEEYLQ. O-linked (GalNAc...) threonine glycosylation occurs at Thr45. The tract at residues 55–65 is interaction with fibrinogen-binding exosite of thrombin; sequence DFEEIPEEYLQ. The segment covering 55–65 has biased composition (acidic residues); that stretch reads DFEEIPEEYLQ. Tyr63 is subject to Sulfotyrosine.

This sequence belongs to the protease inhibitor I14 (hirudin) family.

The protein resides in the secreted. Functionally, hirudin is a potent thrombin-specific protease inhibitor. It forms a stable non-covalent complex with alpha-thrombin, thereby abolishing its ability to cleave fibrinogen. This Hirudo medicinalis (Medicinal leech) protein is Hirudin-3.